We begin with the raw amino-acid sequence, 290 residues long: MLTEDPVSEICEAKAVDELAEQEKNYYCQRCLNHGELKPRKGHKPDCRYLKCPCRECTMVEQRRQLNNLLSKKKIHCTPATQTRDGKRVRDPHCARCSAHGVLVPLRGHKRTMCQFVTCECTLCTLVEHRRNLMAAQIKLRRSQQKSRDGKEPKRNSRRKSKDMDMEMMVVTATDGQKIIGTSASPSPSSTTDTMSPSLSMSPPCSPSPLLAQYTLTLAAPIPIYPPIPMNQQLISLQQQQFLMSIIQNMAPSIGQQAPLLPGISAGSVSSAAILNEFWSMYLKNYGLQA.

2 DNA-binding regions (DM) span residues 28 to 74 (CQRC…SKKK) and 94 to 142 (CARC…KLRR). Disordered stretches follow at residues 139-167 (KLRRSQQKSRDGKEPKRNSRRKSKDMDME) and 179-202 (IIGTSASPSPSSTTDTMSPSLSMS). Basic and acidic residues predominate over residues 146-155 (KSRDGKEPKR). Residues 182–202 (TSASPSPSSTTDTMSPSLSMS) are compositionally biased toward low complexity.

In terms of tissue distribution, expression is undetectable in hermaphrodites, but persists in males. In males, expressed in cells of the tail tip.

Its subcellular location is the nucleus. In terms of biological role, transcription factor which binds the DNA motif 5'-[CGA][TCA][TA]ACAATGT[AT][TGA]C-3', probably as a monomer. Acts partially redundantly with the transcription factor dmd-3 to coordinate tail tip cell fusion and retraction and thereby regulate male tail tip morphogenesis. Promotes male-specific development of two tissues, the peripheral nervous system and the intestine. In the peripheral nervous system, directs differentiation of sensory ray neuroblasts into peripheral sense organs. In the intestine, causes repression of vitellogenin gene transcription. This is Protein male abnormal 3 from Caenorhabditis elegans.